The chain runs to 94 residues: Co-chaperonin GroES (94 aa).

The protein belongs to the GroES chaperonin family. Heptamer of 7 subunits arranged in a ring. Interacts with the chaperonin GroEL.

Its subcellular location is the cytoplasm. Together with the chaperonin GroEL, plays an essential role in assisting protein folding. The GroEL-GroES system forms a nano-cage that allows encapsulation of the non-native substrate proteins and provides a physical environment optimized to promote and accelerate protein folding. GroES binds to the apical surface of the GroEL ring, thereby capping the opening of the GroEL channel. The chain is Co-chaperonin GroES from Streptococcus pneumoniae (strain Taiwan19F-14).